A 696-amino-acid chain; its full sequence is DNA ligase (696 aa).

NAD(+) is bound by residues Asp-43–Asp-47, Ser-92–Leu-93, and Glu-122. The active-site N6-AMP-lysine intermediate is the Lys-124. NAD(+) is bound by residues Arg-145, Glu-185, Lys-301, and Lys-325. The Zn(2+) site is built by Cys-419, Cys-422, Cys-438, and Cys-444. Residues Ser-608–Val-696 enclose the BRCT domain.

It belongs to the NAD-dependent DNA ligase family. LigA subfamily. The cofactor is Mg(2+). Mn(2+) is required as a cofactor.

The enzyme catalyses NAD(+) + (deoxyribonucleotide)n-3'-hydroxyl + 5'-phospho-(deoxyribonucleotide)m = (deoxyribonucleotide)n+m + AMP + beta-nicotinamide D-nucleotide.. Functionally, DNA ligase that catalyzes the formation of phosphodiester linkages between 5'-phosphoryl and 3'-hydroxyl groups in double-stranded DNA using NAD as a coenzyme and as the energy source for the reaction. It is essential for DNA replication and repair of damaged DNA. The polypeptide is DNA ligase (Rhodococcus jostii (strain RHA1)).